Here is a 323-residue protein sequence, read N- to C-terminus: Protein translocase subunit SecF (323 aa).

Over 1–22 the chain is Cytoplasmic; sequence MAQEYTVEQLNHGRKVYDFMRW. A helical membrane pass occupies residues 23-43; the sequence is DYWAFGISGLLLIAAIVIMGV. Residues 44–142 are Periplasmic-facing; that stretch reads RGFNWGLDFT…FVGPSVGADL (99 aa). A helical transmembrane segment spans residues 143-163; sequence AQTGAMALMAALLSILVYVGF. Residues 164-170 lie on the Cytoplasmic side of the membrane; it reads RFEWRLA. A helical membrane pass occupies residues 171 to 191; the sequence is AGVVIALAHDVIITLGILSLF. Residues 192 to 196 lie on the Periplasmic side of the membrane; sequence HIEID. Residues 197–217 traverse the membrane as a helical segment; it reads LTIVASLMSVIGYSLNDSIVV. Residues 218-247 lie on the Cytoplasmic side of the membrane; it reads SDRIRENFRKIRRGTPYEIFNVSLTQTLHR. Residues 248 to 270 traverse the membrane as a helical segment; it reads TLITSGTTLMVILMLYLFGGPVL. Topologically, residues 271–280 are periplasmic; that stretch reads EGFSLTMLIG. A helical membrane pass occupies residues 281-301; sequence VSIGTASSIYVASALALKLGM. The Cytoplasmic segment spans residues 302-323; that stretch reads KREHMLQQKVEKEGADQPSILP.

This sequence belongs to the SecD/SecF family. SecF subfamily. Forms a complex with SecD. Part of the essential Sec protein translocation apparatus which comprises SecA, SecYEG and auxiliary proteins SecDF-YajC and YidC.

It is found in the cell inner membrane. Functionally, part of the Sec protein translocase complex. Interacts with the SecYEG preprotein conducting channel. SecDF uses the proton motive force (PMF) to complete protein translocation after the ATP-dependent function of SecA. The sequence is that of Protein translocase subunit SecF from Escherichia coli O157:H7.